We begin with the raw amino-acid sequence, 84 residues long: Sulfur carrier protein TusA (84 aa).

Cysteine 21 functions as the Cysteine persulfide intermediate in the catalytic mechanism.

Belongs to the sulfur carrier protein TusA family.

The protein localises to the cytoplasm. Functionally, sulfur carrier protein which probably makes part of a sulfur-relay system. The sequence is that of Sulfur carrier protein TusA from Pseudomonas syringae pv. syringae (strain B728a).